The sequence spans 110 residues: METSAVLRSVRLSAQKGRLVADQIRGLQVERAIRLLTFSPKKGASIILKLLESAVANAEHNEGADIDELKISQIFIGQGATLKRVSPRAKGRGNRISKPTCNIFLTVSNK.

Belongs to the universal ribosomal protein uL22 family. In terms of assembly, part of the 50S ribosomal subunit.

This protein binds specifically to 23S rRNA; its binding is stimulated by other ribosomal proteins, e.g. L4, L17, and L20. It is important during the early stages of 50S assembly. It makes multiple contacts with different domains of the 23S rRNA in the assembled 50S subunit and ribosome. In terms of biological role, the globular domain of the protein is located near the polypeptide exit tunnel on the outside of the subunit, while an extended beta-hairpin is found that lines the wall of the exit tunnel in the center of the 70S ribosome. In Nitrosomonas europaea (strain ATCC 19718 / CIP 103999 / KCTC 2705 / NBRC 14298), this protein is Large ribosomal subunit protein uL22.